The chain runs to 2276 residues: Non-reducing polyketide synthase VdtA (2276 aa).

The interval 8–243 (YLFGDQTYDY…KDIPIHAPYH (236 aa)) is N-terminal acylcarrier protein transacylase (SAT) domain. The Ketosynthase family 3 (KS3) domain occupies 372 to 804 (RAKIAIVGMS…GGNSSVLVED (433 aa)). Residues cysteine 544, histidine 679, and histidine 723 each act as for beta-ketoacyl synthase activity in the active site. A malonyl-CoA:ACP transacylase (MAT) domain region spans residues 905–1206 (FTFTGQGAQY…KALPTLQRNR (302 aa)). The For acyl/malonyl transferase activity role is filled by serine 996. Residues 1300-1616 (TTTLHRIVDE…PRRVLRYILQ (317 aa)) form a product template (PT) domain region. The segment at 1304-1438 (HRIVDEKSTE…CRIKFSDRST (135 aa)) is N-terminal hotdog fold. The region spanning 1304–1612 (HRIVDEKSTE…IQGVPRRVLR (309 aa)) is the PKS/mFAS DH domain. The active-site Proton acceptor; for dehydratase activity is histidine 1336. The interval 1465–1612 (TYRFNGPMAY…IQGVPRRVLR (148 aa)) is C-terminal hotdog fold. Aspartate 1525 acts as the Proton donor; for dehydratase activity in catalysis. The 75-residue stretch at 1655 to 1729 (SGTLTEALRI…DLKRFFDKIN (75 aa)) folds into the Carrier 1 domain. Serine 1689 carries the post-translational modification O-(pantetheine 4'-phosphoryl)serine. The disordered stretch occupies residues 1735 to 1762 (APAPVSDAPKQLQPSSSPVASATPSAPI). The segment covering 1748-1761 (PSSSPVASATPSAP) has biased composition (low complexity). In terms of domain architecture, Carrier 2 spans 1765 to 1839 (RSKFESVLNI…DLKAHFMSKN (75 aa)). Serine 1799 bears the O-(pantetheine 4'-phosphoryl)serine mark. A compositionally biased stretch (polar residues) spans 1840 to 1854 (SDNGSSAVLTPQPSR). The tract at residues 1840–1882 (SDNGSSAVLTPQPSRDSALPERTRPRVADTSDEEDAPVSANEF) is disordered. The span at 1857–1868 (ALPERTRPRVAD) shows a compositional bias: basic and acidic residues. One can recognise a Carrier 3 domain in the interval 1886–1964 (ARSTSKYMAV…GLRSFFGFES (79 aa)). Serine 1923 is subject to O-(pantetheine 4'-phosphoryl)serine. The interval 1967–1993 (TATNPTASQSSSSISSGTSVFDTSPSP) is disordered. The segment covering 1969 to 1990 (TNPTASQSSSSISSGTSVFDTS) has biased composition (low complexity). Residues 2020-2271 (PLPPATSVTL…GADHFSLLVS (252 aa)) form a thioesterase (TE) domain region.

It localises to the cytoplasmic vesicle. The catalysed reaction is 7 malonyl-CoA + acetyl-CoA + 7 H(+) = 7,9,10-trihydroxy-3-(2-oxopropyl)-1H-benzo[g]isochromen-1-one + 7 CO2 + 8 CoA + 2 H2O. The protein operates within secondary metabolite biosynthesis. Non-reducing polyketide synthase; part of the gene cluster that mediates the biosynthesis of viriditoxin, one of the 'classical' secondary metabolites produced by fungi and that has antibacterial activity. The first step is performed by the polyketide synthase VdtA which condenses one acetyl-CoA and 6 malonyl-CoA units to form the heptaketide monomer backbone of viriditoxin. The product of VdtA is then O-methylated on C7 by the O-methyltransferase VdtC. The O-methyl group is important for the stereoselective coupling of the monomers at the final step of viriditoxin biosynthesis. The short-chain dehydrogenase/reductase VdtF then acts as a stereospecific reductase converting the pyrone to dihydropyrone via the reduction of the C3-C4 double bond. The FAD-binding monooxygenase VdtE then converts the ketone group into a methyl-ester group to yield semi-viriditoxin. Finally, the laccase VdtB is involved in dimerization of 2 semi-viriditoxin molecules to yield the final viriditoxin. VdtB is responsible for the regioselective 6,6'-coupling of semi-viriditoxin, which yields (M)-viriditoxin and (P)-viriditoxin at a ratio of 1:2. The non-catalytic carboxylesterase-like protein VdtD affects the stereochemistical outcome of the coupling. The highly reducing polyketide synthase VdtX is not involved in viriditoxin synthesis, but might possibly play a role in the production of additional metabolites not identified yet. The polypeptide is Non-reducing polyketide synthase VdtA (Byssochlamys spectabilis (Paecilomyces variotii)).